The sequence spans 174 residues: Major allergen Can f 1 (174 aa).

The N-terminal stretch at 1 to 18 (MKTLLLTIGFSLIAILQA) is a signal peptide. The cysteines at positions 78 and 169 are disulfide-linked. An N-linked (GlcNAc...) asparagine glycan is attached at Asn80.

It belongs to the calycin superfamily. Lipocalin family. In terms of tissue distribution, tongue epithelial tissue.

It is found in the secreted. The sequence is that of Major allergen Can f 1 from Canis lupus familiaris (Dog).